Consider the following 224-residue polypeptide: Ribose-5-phosphate isomerase A 2 (224 aa).

Residues 27–30 (SGST), 83–86 (DGTD), and 96–99 (KGGG) each bind substrate. Glutamate 105 serves as the catalytic Proton acceptor. Lysine 123 serves as a coordination point for substrate.

It belongs to the ribose 5-phosphate isomerase family. Homodimer.

The enzyme catalyses aldehydo-D-ribose 5-phosphate = D-ribulose 5-phosphate. Its pathway is carbohydrate degradation; pentose phosphate pathway; D-ribose 5-phosphate from D-ribulose 5-phosphate (non-oxidative stage): step 1/1. In terms of biological role, catalyzes the reversible conversion of ribose-5-phosphate to ribulose 5-phosphate. The polypeptide is Ribose-5-phosphate isomerase A 2 (Oceanobacillus iheyensis (strain DSM 14371 / CIP 107618 / JCM 11309 / KCTC 3954 / HTE831)).